Here is a 153-residue protein sequence, read N- to C-terminus: Phosphopantetheine adenylyltransferase (153 aa).

Serine 11 provides a ligand contact to substrate. ATP-binding positions include 11–12 and histidine 19; that span reads SF. Residues lysine 43, threonine 75, and arginine 89 each contribute to the substrate site. ATP-binding positions include 90–92, glutamate 100, and 124–130; these read GIR and LSFISSS.

The protein belongs to the bacterial CoaD family. As to quaternary structure, homohexamer. Mg(2+) is required as a cofactor.

Its subcellular location is the cytoplasm. The catalysed reaction is (R)-4'-phosphopantetheine + ATP + H(+) = 3'-dephospho-CoA + diphosphate. It participates in cofactor biosynthesis; coenzyme A biosynthesis; CoA from (R)-pantothenate: step 4/5. Functionally, reversibly transfers an adenylyl group from ATP to 4'-phosphopantetheine, yielding dephospho-CoA (dPCoA) and pyrophosphate. The polypeptide is Phosphopantetheine adenylyltransferase (Porphyromonas gingivalis (strain ATCC 33277 / DSM 20709 / CIP 103683 / JCM 12257 / NCTC 11834 / 2561)).